A 368-amino-acid polypeptide reads, in one-letter code: Zinc finger protein 24 (368 aa).

Lysine 22 participates in a covalent cross-link: Glycyl lysine isopeptide (Lys-Gly) (interchain with G-Cter in SUMO2). Lysine 27 participates in a covalent cross-link: Glycyl lysine isopeptide (Lys-Gly) (interchain with G-Cter in SUMO1); alternate. Lysine 27 participates in a covalent cross-link: Glycyl lysine isopeptide (Lys-Gly) (interchain with G-Cter in SUMO2); alternate. The region spanning 52–134 is the SCAN box domain; sequence RQRFRQFGYQ…TVLEDLESEL (83 aa). Residues serine 132 and serine 142 each carry the phosphoserine modification. Residues lysine 147, lysine 177, and lysine 236 each participate in a glycyl lysine isopeptide (Lys-Gly) (interchain with G-Cter in SUMO2) cross-link. The segment at 251 to 273 adopts a C2H2-type 1 zinc-finger fold; the sequence is HICDECGKHFSQGSALILHQRIH. Residues 251–301 form a necessary and sufficient for nuclear localization region; that stretch reads HICDECGKHFSQGSALILHQRIHSGEKPYGCVECGKAFSRSSILVQHQRVH. Serine 274 is modified (phosphoserine). Glycyl lysine isopeptide (Lys-Gly) (interchain with G-Cter in SUMO2) cross-links involve residues lysine 277 and lysine 286. 3 C2H2-type zinc fingers span residues 279–301, 307–329, and 335–357; these read YGCVECGKAFSRSSILVQHQRVH, YKCLECGKAFSQNSGLINHQRIH, and YECVQCGKSYSQSSNLFRHXXRH. Residue serine 292 is modified to Phosphoserine. Tyrosine 335 carries the phosphotyrosine modification. Glycyl lysine isopeptide (Lys-Gly) (interchain with G-Cter in SUMO2) cross-links involve residues lysine 361 and lysine 367.

This sequence belongs to the krueppel C2H2-type zinc-finger protein family. Sumoylated.

Its subcellular location is the nucleus. In terms of biological role, transcription factor required for myelination of differentiated oligodendrocytes. Required for the conversion of oligodendrocytes from the premyelinating to the myelinating state. In the developing central nervous system (CNS), involved in the maintenance in the progenitor stage by promoting the cell cycle. Specifically binds to the 5'-TCAT-3' DNA sequence. Has transcription repressor activity in vitro. In Pan troglodytes (Chimpanzee), this protein is Zinc finger protein 24 (ZNF24).